We begin with the raw amino-acid sequence, 111 residues long: Large ribosomal subunit protein uL22 (111 aa).

Belongs to the universal ribosomal protein uL22 family. Part of the 50S ribosomal subunit.

This protein binds specifically to 23S rRNA; its binding is stimulated by other ribosomal proteins, e.g. L4, L17, and L20. It is important during the early stages of 50S assembly. It makes multiple contacts with different domains of the 23S rRNA in the assembled 50S subunit and ribosome. Functionally, the globular domain of the protein is located near the polypeptide exit tunnel on the outside of the subunit, while an extended beta-hairpin is found that lines the wall of the exit tunnel in the center of the 70S ribosome. This chain is Large ribosomal subunit protein uL22, found in Stenotrophomonas maltophilia (strain R551-3).